Reading from the N-terminus, the 429-residue chain is Serine hydroxymethyltransferase (429 aa).

Residues Leu-127 and 131–133 contribute to the (6S)-5,6,7,8-tetrahydrofolate site; that span reads GHL. An N6-(pyridoxal phosphate)lysine modification is found at Lys-236. Glu-252 is a (6S)-5,6,7,8-tetrahydrofolate binding site.

It belongs to the SHMT family. Homodimer. Pyridoxal 5'-phosphate is required as a cofactor.

It localises to the cytoplasm. The enzyme catalyses (6R)-5,10-methylene-5,6,7,8-tetrahydrofolate + glycine + H2O = (6S)-5,6,7,8-tetrahydrofolate + L-serine. It functions in the pathway one-carbon metabolism; tetrahydrofolate interconversion. Its pathway is amino-acid biosynthesis; glycine biosynthesis; glycine from L-serine: step 1/1. Catalyzes the reversible interconversion of serine and glycine with tetrahydrofolate (THF) serving as the one-carbon carrier. This reaction serves as the major source of one-carbon groups required for the biosynthesis of purines, thymidylate, methionine, and other important biomolecules. Also exhibits THF-independent aldolase activity toward beta-hydroxyamino acids, producing glycine and aldehydes, via a retro-aldol mechanism. The polypeptide is Serine hydroxymethyltransferase (Rhodospirillum centenum (strain ATCC 51521 / SW)).